The primary structure comprises 231 residues: Flagellar L-ring protein (231 aa).

Positions 1–18 (MNRLLSVFALGGAVLLAG) are cleaved as a signal peptide. C19 carries the N-palmitoyl cysteine lipid modification. C19 carries S-diacylglycerol cysteine lipidation.

This sequence belongs to the FlgH family. In terms of assembly, the basal body constitutes a major portion of the flagellar organelle and consists of four rings (L,P,S, and M) mounted on a central rod.

The protein resides in the cell outer membrane. The protein localises to the bacterial flagellum basal body. In terms of biological role, assembles around the rod to form the L-ring and probably protects the motor/basal body from shearing forces during rotation. In Pseudomonas putida (strain GB-1), this protein is Flagellar L-ring protein.